Reading from the N-terminus, the 391-residue chain is Probable sugar efflux transporter (391 aa).

The next 12 membrane-spanning stretches (helical) occupy residues 16 to 36, 51 to 71, 82 to 102, 103 to 123, 138 to 158, 170 to 190, 210 to 230, 247 to 267, 277 to 297, 300 to 320, 338 to 358, and 361 to 381; these read VFVF…PIAL, VGLM…PLML, LLFL…AWDF, WVLL…WSIT, QALG…LPLG, TFGM…RLLP, PLLV…FTTY, VATL…FLFG, FIAC…SFKH, WVIF…GISL, IFSG…SIVI, and LGLG…LFWF.

This sequence belongs to the major facilitator superfamily. SotB (TC 2.A.1.2) family.

The protein localises to the cell inner membrane. In terms of biological role, involved in the efflux of sugars. The physiological role may be the reduction of the intracellular concentration of toxic sugars or sugar metabolites. The polypeptide is Probable sugar efflux transporter (Helicobacter acinonychis (strain Sheeba)).